The chain runs to 130 residues: Small ribosomal subunit protein uS8 (130 aa).

The protein belongs to the universal ribosomal protein uS8 family. In terms of assembly, part of the 30S ribosomal subunit. Contacts proteins S5 and S12.

In terms of biological role, one of the primary rRNA binding proteins, it binds directly to 16S rRNA central domain where it helps coordinate assembly of the platform of the 30S subunit. This is Small ribosomal subunit protein uS8 from Haemophilus influenzae (strain 86-028NP).